We begin with the raw amino-acid sequence, 525 residues long: GMP synthase [glutamine-hydrolyzing] (525 aa).

In terms of domain architecture, Glutamine amidotransferase type-1 spans 9–207 (KILILDFGSQ…IVDICGCDTL (199 aa)). Catalysis depends on C86, which acts as the Nucleophile. Active-site residues include H181 and E183. The GMPS ATP-PPase domain occupies 208 to 400 (WTPANIAQDA…LGLPYDMVYR (193 aa)). 235 to 241 (SGGVDSS) contacts ATP.

As to quaternary structure, homodimer.

The enzyme catalyses XMP + L-glutamine + ATP + H2O = GMP + L-glutamate + AMP + diphosphate + 2 H(+). It functions in the pathway purine metabolism; GMP biosynthesis; GMP from XMP (L-Gln route): step 1/1. Its function is as follows. Catalyzes the synthesis of GMP from XMP. The sequence is that of GMP synthase [glutamine-hydrolyzing] from Marinomonas sp. (strain MWYL1).